We begin with the raw amino-acid sequence, 146 residues long: Catabolic 3-dehydroquinase (146 aa).

The Proton acceptor role is filled by Tyr-24. 3 residues coordinate substrate: Asn-78, His-84, and Asp-91. Residue His-104 is the Proton donor of the active site. Substrate is bound by residues Ile-105–Thr-106 and Arg-115.

Belongs to the type-II 3-dehydroquinase family. As to quaternary structure, homododecamer. Adopts a ring-like structure, composed of an arrangement of two hexameric rings stacked on top of one another.

The enzyme catalyses 3-dehydroquinate = 3-dehydroshikimate + H2O. It participates in aromatic compound metabolism; 3,4-dihydroxybenzoate biosynthesis; 3,4-dihydroxybenzoate from 3-dehydroquinate: step 1/2. Functionally, is involved in the catabolism of quinate. Allows the utilization of quinate as carbon source via the beta-ketoadipate pathway. This is Catabolic 3-dehydroquinase from Candida tropicalis (strain ATCC MYA-3404 / T1) (Yeast).